The following is a 127-amino-acid chain: Small ribosomal subunit protein uS13 (127 aa).

Residues 90–127 (KRHREGLPVNGQRTRTNARTRKGKRKTVAGRSQSTQKK) form a disordered region. Over residues 105–117 (TNARTRKGKRKTV) the composition is skewed to basic residues.

It belongs to the universal ribosomal protein uS13 family. As to quaternary structure, part of the 30S ribosomal subunit. Forms a loose heterodimer with protein S19. Forms two bridges to the 50S subunit in the 70S ribosome.

Functionally, located at the top of the head of the 30S subunit, it contacts several helices of the 16S rRNA. In the 70S ribosome it contacts the 23S rRNA (bridge B1a) and protein L5 of the 50S subunit (bridge B1b), connecting the 2 subunits; these bridges are implicated in subunit movement. Contacts the tRNAs in the A and P-sites. In Salinibacter ruber (strain DSM 13855 / M31), this protein is Small ribosomal subunit protein uS13.